A 105-amino-acid chain; its full sequence is UPF0145 protein OEOE_0637 (105 aa).

It belongs to the UPF0145 family.

The chain is UPF0145 protein OEOE_0637 from Oenococcus oeni (strain ATCC BAA-331 / PSU-1).